Here is a 115-residue protein sequence, read N- to C-terminus: Peptidyl-tRNA hydrolase (115 aa).

It belongs to the PTH2 family.

The protein resides in the cytoplasm. It catalyses the reaction an N-acyl-L-alpha-aminoacyl-tRNA + H2O = an N-acyl-L-amino acid + a tRNA + H(+). In terms of biological role, the natural substrate for this enzyme may be peptidyl-tRNAs which drop off the ribosome during protein synthesis. This Nanoarchaeum equitans (strain Kin4-M) protein is Peptidyl-tRNA hydrolase (pth).